We begin with the raw amino-acid sequence, 213 residues long: Uridine kinase (213 aa).

15–22 (GASASGKS) is an ATP binding site.

Belongs to the uridine kinase family.

It localises to the cytoplasm. It carries out the reaction uridine + ATP = UMP + ADP + H(+). It catalyses the reaction cytidine + ATP = CMP + ADP + H(+). Its pathway is pyrimidine metabolism; CTP biosynthesis via salvage pathway; CTP from cytidine: step 1/3. It participates in pyrimidine metabolism; UMP biosynthesis via salvage pathway; UMP from uridine: step 1/1. This is Uridine kinase from Salmonella paratyphi A (strain ATCC 9150 / SARB42).